The sequence spans 315 residues: MEALPQIRQTLSEIDRRIPDALRVAMGLRLRPTAGAALEEVTRIAASCLPRPCPEGGDDPMECDEAAPARALRMEAASCFLPDHDEDTHFVRPEAGVVALADGVGGYRAPGVDAAAFARALMYNAFEMVVATTPGGAGGICPYALLGWAYEQAVSARTQGASTAVILSLAGATLKYAYIGDSAFAVFRDGKLFFRSEAQVHSFNYPFQLSVKNGNSVTSAARGGVEVKEGDVVVAGTDGLFDNVTSEELQRIVAMGRALGLSPKQTADVVAGFAYEASTTMGRDTPFSLESRKKQGTIFRRGKRDDITVVVAYIV.

Residues 71 to 314 (ALRMEAASCF…DDITVVVAYI (244 aa)) enclose the PPM-type phosphatase domain. Mn(2+) contacts are provided by Asp-102, Gly-103, Asp-238, and Asp-305.

The protein belongs to the PP2C family. Mg(2+) is required as a cofactor. Mn(2+) serves as cofactor.

It catalyses the reaction O-phospho-L-seryl-[protein] + H2O = L-seryl-[protein] + phosphate. The enzyme catalyses O-phospho-L-threonyl-[protein] + H2O = L-threonyl-[protein] + phosphate. The sequence is that of Putative protein phosphatase 2C 24 from Oryza sativa subsp. japonica (Rice).